The following is a 447-amino-acid chain: M-phase inducer phosphatase 3 (447 aa).

At serine 2 the chain carries N-acetylserine. Residues serine 20, serine 38, serine 56, serine 60, and serine 63 each carry the phosphoserine modification. Threonine 66 is modified (phosphothreonine; by CDK1). Positions 81-90 (MSASPLTTSA) are enriched in polar residues. The interval 81–109 (MSASPLTTSADLEDNGSLDSSGPLDRQLT) is disordered. Serine 128 carries the post-translational modification Phosphoserine. The residue at position 129 (threonine 129) is a Phosphothreonine. Serine 192 carries the post-translational modification Phosphoserine; by CDK1. Phosphoserine; by PLK3 occurs at positions 213 and 220. One can recognise a Rhodanese domain in the interval 294–401 (VIERFYIIDC…FFPEYMELCD (108 aa)). Residue cysteine 350 is part of the active site. Serine 445 carries the post-translational modification Phosphoserine.

The protein belongs to the MPI phosphatase family. In terms of assembly, interacts with MAPK14 and 14-3-3 proteins. When phosphorylated on Ser-128 and/or Thr-129, interacts with PLK1. Interacts with MARK3/C-TAK1. In terms of processing, phosphorylated by PLK4. Phosphorylated by PLK1, leading to activate the phosphatase activity. Phosphorylated by CHEK1 and MAPKAPK2. This phosphorylation creates a binding site for 14-3-3 protein and inhibits the phosphatase activity. Phosphorylation by PLK3 at Ser-213 promotes nuclear translocation. Ser-220 is a minor phosphorylation site. Phosphorylation by CDK1 occurs at G2 and G2-M transition and leads to increased activity. In terms of tissue distribution, spleen and thymus.

Its subcellular location is the nucleus. The enzyme catalyses O-phospho-L-tyrosyl-[protein] + H2O = L-tyrosyl-[protein] + phosphate. Functionally, functions as a dosage-dependent inducer in mitotic control. Tyrosine protein phosphatase required for progression of the cell cycle. When phosphorylated, highly effective in activating G2 cells into prophase. Directly dephosphorylates CDK1 and activates its kinase activity. The sequence is that of M-phase inducer phosphatase 3 (Cdc25c) from Mus musculus (Mouse).